The following is a 334-amino-acid chain: Spermidine synthase 1 (334 aa).

Residues 1–37 (MAAPENTLHSTDSPLKRQREDEVNGVSDTLSKEPQPN) are disordered. Polar residues predominate over residues 26–37 (VSDTLSKEPQPN). The 238-residue stretch at 44–281 (PGWFSEISPM…GMIGFMLCST (238 aa)) folds into the PABS domain. Glutamine 75 contacts S-adenosyl 3-(methylsulfanyl)propylamine. Tyrosine 105 contributes to the putrescine binding site. Residues glutamine 106, aspartate 130, glutamate 150, 181–182 (DG), and aspartate 200 contribute to the S-adenosyl 3-(methylsulfanyl)propylamine site. Aspartate 200 serves as the catalytic Proton acceptor. Putrescine contacts are provided by residues 200-203 (DSSD) and tyrosine 269.

Belongs to the spermidine/spermine synthase family.

It carries out the reaction S-adenosyl 3-(methylsulfanyl)propylamine + putrescine = S-methyl-5'-thioadenosine + spermidine + H(+). The protein operates within amine and polyamine biosynthesis; spermidine biosynthesis; spermidine from putrescine: step 1/1. This chain is Spermidine synthase 1 (SPDSYN1), found in Pisum sativum (Garden pea).